The sequence spans 249 residues: Zinc finger AN1 and C2H2 domain-containing stress-associated protein 13 (249 aa).

AN1-type zinc fingers lie at residues 7-55 and 95-145; these read PDLG…RGDV and AVKK…KPES. Cysteine 13, cysteine 18, cysteine 28, cysteine 31, cysteine 36, histidine 39, histidine 45, cysteine 47, cysteine 101, cysteine 106, cysteine 118, cysteine 121, cysteine 126, histidine 129, histidine 135, and cysteine 137 together coordinate Zn(2+). Residues 194 to 213 are disordered; sequence FASGNDGNSEKTQERNGKQN. Basic and acidic residues predominate over residues 201-210; sequence NSEKTQERNG. The C2H2-type zinc-finger motif lies at 220-243; the sequence is DVCPKCSRGFRDPVDLLKHIDKDH.

Its function is as follows. May be involved in environmental stress response. The chain is Zinc finger AN1 and C2H2 domain-containing stress-associated protein 13 (SAP13) from Arabidopsis thaliana (Mouse-ear cress).